We begin with the raw amino-acid sequence, 261 residues long: Na(+)-translocating NADH-quinone reductase subunit C (261 aa).

Residues 12-32 (LGVVIGLSLVCSIIVSTAAVG) form a helical membrane-spanning segment. An FMN phosphoryl threonine modification is found at Thr-229.

This sequence belongs to the NqrC family. In terms of assembly, composed of six subunits; NqrA, NqrB, NqrC, NqrD, NqrE and NqrF. FMN serves as cofactor.

It is found in the cell inner membrane. The enzyme catalyses a ubiquinone + n Na(+)(in) + NADH + H(+) = a ubiquinol + n Na(+)(out) + NAD(+). In terms of biological role, NQR complex catalyzes the reduction of ubiquinone-1 to ubiquinol by two successive reactions, coupled with the transport of Na(+) ions from the cytoplasm to the periplasm. NqrA to NqrE are probably involved in the second step, the conversion of ubisemiquinone to ubiquinol. The sequence is that of Na(+)-translocating NADH-quinone reductase subunit C from Vibrio parahaemolyticus serotype O3:K6 (strain RIMD 2210633).